A 1477-amino-acid chain; its full sequence is MTITVGDAVSETELENKSQNVVLSPKASASSDISTDVDKDTSSSWDDKSLLPTGEYIVDRNKPQTYLNSDDIEKVTESDIFPQKRLFSFLHSKKIPEVPQTDDERKIYPLFHTNIISNMFFWWVLPILRVGYKRTIQPNDLFKMDPRMSIETLYDDFEKNMIYYFEKTRKKYRKRHPEATEEEVMENAKLPKHTVLRALLFTFKKQYFMSIVFAILANCTSGFNPMITKRLIEFVEEKAIFHSMHVNKGIGYAIGACLMMFVNGLTFNHFFHTSQLTGVQAKSILTKAAMKKMFNASNYARHCFPNGKVTSFVTTDLARIEFALSFQPFLAGFPAILAICIVLLIVNLGPIALVGIGIFFGGFFISLFAFKLILGFRIAANIFTDARVTMMREVLNNIKMIKYYTWEDAYEKNIQDIRTKEISKVRKMQLSRNFLIAMAMSLPSIASLVTFLAMYKVNKGGRQPGNIFASLSLFQVLSLQMFFLPIAIGTGIDMIIGLGRLQSLLEAPEDDPNQMIEMKPSPGFDPKLALKMTHCSFEWEDYELNDAIEEAKGEAKDEGKKNKKKRKDTWGKPSASTNKAKRLDNMLKDRDGPEDLEKTSFRGFKDLNFDIKKGEFIMITGPIGTGKSSLLNAMAGSMRKTDGKVEVNGDLLMCGYPWIQNASVRDNIIFGSPFNKEKYDEVVRVCSLKADLDILPAGDMTEIGERGITLSGGQKARINLARSVYKKKDIYLFDDVLSAVDSRVGKHIMDECLTGMLANKTRILATHQLSLIERASRVIVLGTDGQVDIGTVDELKARNQTLINLLQFSSQNSEKEDEEQEAVVAGELGQLKYESEVKELTELKKKATEMSQTANSGKIVADGHTSSKEERAVNSISLKIYREYIKAAVGKWGFIALPLYAILVVGTTFCSLFSSVWLSYWTENKFKNRPPSFYMGLYSFFVFAAFIFMNGQFTILCAMGIMASKWLNLRAVKRILHTPMSYIDTTPLGRILNRFTKDTDSLDNELTESLRLMTSQFANIVGVCVMCIVYLPWFAIAIPFLLVIFVLIADHYQSSGREIKRLEAVQRSFVYNNLNEVLGGMDTIKAYRSQERFLAKSDFLINKMNEAGYLVVVLQRWVGIFLDMVAIAFALIITLLCVTRAFPISAASVGVLLTYVLQLPGLLNTILRAMTQTENDMNSAERLVTYATELPLEASYRKPEMTPPESWPSMGEIIFENVDFAYRPGLPIVLKNLNLNIKSGEKIGICGRTGAGKSTIMSALYRLNELTAGKILIDNVDISQLGLFDLRRKLAIIPQDPVLFRGTIRKNLDPFNERTDDELWDALVRGGAIAKDDLPEVKLQKPDENGTHGKMHKFHLDQAVEEEGSNFSLGERQLLALTRALVRQSKILILDEATSSVDYETDGKIQTRIVEEFGDCTILCIAHRLKTIVNYDRILVLEKGEVAEFDTPWTLFSQEDSIFRSMCSRSGIVENDFENRS.

The segment at 1–48 is disordered; the sequence is MTITVGDAVSETELENKSQNVVLSPKASASSDISTDVDKDTSSSWDDK. At 1–206 the chain is on the cytoplasmic side; it reads MTITVGDAVS…RALLFTFKKQ (206 aa). Phosphoserine occurs at positions 10 and 24. Residues 36-48 are compositionally biased toward basic and acidic residues; that stretch reads DVDKDTSSSWDDK. Residue Thr-53 is modified to Phosphothreonine. Residues 71–73 carry the Diacidic ER export motif DxE motif; it reads DIE. The helical transmembrane segment at 207–227 threads the bilayer; it reads YFMSIVFAILANCTSGFNPMI. Positions 207–493 constitute an ABC transmembrane type-1 1 domain; it reads YFMSIVFAIL…LPIAIGTGID (287 aa). The Extracellular portion of the chain corresponds to 228-249; sequence TKRLIEFVEEKAIFHSMHVNKG. Residues 250 to 270 form a helical membrane-spanning segment; that stretch reads IGYAIGACLMMFVNGLTFNHF. Residues 271-328 lie on the Cytoplasmic side of the membrane; the sequence is FHTSQLTGVQAKSILTKAAMKKMFNASNYARHCFPNGKVTSFVTTDLARIEFALSFQP. A helical membrane pass occupies residues 329–349; it reads FLAGFPAILAICIVLLIVNLG. The Extracellular segment spans residues 350–357; sequence PIALVGIG. The helical transmembrane segment at 358–370 threads the bilayer; that stretch reads IFFGGFFISLFAF. Over 371–433 the chain is Cytoplasmic; the sequence is KLILGFRIAA…KVRKMQLSRN (63 aa). A helical transmembrane segment spans residues 434–454; it reads FLIAMAMSLPSIASLVTFLAM. Residues 455–478 are Extracellular-facing; it reads YKVNKGGRQPGNIFASLSLFQVLS. Residues 479 to 499 traverse the membrane as a helical segment; the sequence is LQMFFLPIAIGTGIDMIIGLG. Residues 500-615 are Cytoplasmic-facing; that stretch reads RLQSLLEAPE…DLNFDIKKGE (116 aa). The segment at 552 to 595 is disordered; it reads KGEAKDEGKKNKKKRKDTWGKPSASTNKAKRLDNMLKDRDGPED. Residues 581 to 595 are compositionally biased toward basic and acidic residues; it reads KRLDNMLKDRDGPED. An ABC transporter 1 domain is found at 581 to 808; it reads KRLDNMLKDR…NQTLINLLQF (228 aa). Residues 616–636 traverse the membrane as a helical segment; the sequence is FIMITGPIGTGKSSLLNAMAG. 621-628 provides a ligand contact to ATP; the sequence is GPIGTGKS. Residues 637 to 892 are Extracellular-facing; sequence SMRKTDGKVE…EYIKAAVGKW (256 aa). Residues Asn-661, Asn-759, and Asn-799 are each glycosylated (N-linked (GlcNAc...) asparagine). The helical transmembrane segment at 893–913 threads the bilayer; that stretch reads GFIALPLYAILVVGTTFCSLF. The region spanning 897 to 1175 is the ABC transmembrane type-1 2 domain; the sequence is LPLYAILVVG…ILRAMTQTEN (279 aa). The Cytoplasmic segment spans residues 914 to 940; it reads SSVWLSYWTENKFKNRPPSFYMGLYSF. Residues 941-961 form a helical membrane-spanning segment; sequence FVFAAFIFMNGQFTILCAMGI. Topologically, residues 962–1027 are extracellular; the sequence is MASKWLNLRA…ANIVGVCVMC (66 aa). The chain crosses the membrane as a helical span at residues 1028–1048; it reads IVYLPWFAIAIPFLLVIFVLI. The Cytoplasmic portion of the chain corresponds to 1049–1117; that stretch reads ADHYQSSGRE…GYLVVVLQRW (69 aa). The helical transmembrane segment at 1118–1138 threads the bilayer; sequence VGIFLDMVAIAFALIITLLCV. At 1139–1141 the chain is on the extracellular side; sequence TRA. A helical membrane pass occupies residues 1142 to 1162; sequence FPISAASVGVLLTYVLQLPGL. At 1163–1477 the chain is on the cytoplasmic side; it reads LNTILRAMTQ…IVENDFENRS (315 aa). Residues 1213–1464 form the ABC transporter 2 domain; sequence IIFENVDFAY…EDSIFRSMCS (252 aa). ATP is bound at residue 1247–1254; that stretch reads GRTGAGKS.

It belongs to the ABC transporter superfamily. ABCC family. Conjugate transporter (TC 3.A.1.208) subfamily.

It is found in the cell membrane. It carries out the reaction a 1,2-diacyl-sn-glycero-3-phosphoethanolamine(in) + ATP + H2O = a 1,2-diacyl-sn-glycero-3-phosphoethanolamine(out) + ADP + phosphate + H(+). The enzyme catalyses Cd(2+)(in) + ATP + H2O = Cd(2+)(out) + ADP + phosphate + H(+). The catalysed reaction is an S-substituted glutathione(in) + ATP + H2O = an S-substituted glutathione(out) + ADP + phosphate + H(+). In terms of biological role, functions as a pleiotropic drug pump at the plasma membrane to clear toxic substances from the cytosol. Organic anion transporter involved in the detoxification of a wide range of toxic environmental organic anions that contain carboxyl groups. Required for tolerance to reveromycin A, tautomycin and leptomycin B. Required for oligomycin resistance. Required for rhodamine B resistance. Mediates the ATP-dependent efflux of rhodamine B. Involved in cadmium detoxification. Displays an energy-dependent efflux of cadmium and glutathione, suggesting that YOR1 transports both compounds as a bis-glutathionato-cadmium Cd-(GS)(2) complex. Confers resistance to rhodamine 6G and to doxorubicin. The polypeptide is Oligomycin resistance ATP-dependent permease YOR1 (Saccharomyces cerevisiae (strain ATCC 204508 / S288c) (Baker's yeast)).